A 905-amino-acid chain; its full sequence is Probable coatomer subunit gamma (905 aa).

5 HEAT repeats span residues threonine 265–aspartate 302, aspartate 303–histidine 340, aspartate 374–arginine 412, glutamine 414–glutamate 450, and lysine 525–phenylalanine 563. A Phosphoserine modification is found at serine 604.

The protein belongs to the COPG family. In terms of assembly, oligomeric complex that consists of at least the alpha, beta, beta', gamma, delta, epsilon and zeta subunits.

Its subcellular location is the cytoplasm. The protein localises to the golgi apparatus membrane. It is found in the cytoplasmic vesicle. It localises to the COPI-coated vesicle membrane. Functionally, the coatomer is a cytosolic protein complex that binds to dilysine motifs and reversibly associates with Golgi non-clathrin-coated vesicles, which further mediate biosynthetic protein transport from the ER, via the Golgi up to the trans Golgi network. Coatomer complex is required for budding from Golgi membranes, and is essential for the retrograde Golgi-to-ER transport of dilysine-tagged proteins. In Schizosaccharomyces pombe (strain 972 / ATCC 24843) (Fission yeast), this protein is Probable coatomer subunit gamma (sec21).